The primary structure comprises 459 residues: Alpha,alpha-trehalose-phosphate synthase [UDP-forming] (459 aa).

Residues tyrosine 86 and aspartate 140 each contribute to the D-glucose 6-phosphate site. UDP is bound by residues arginine 262 and lysine 267. 2 residues coordinate UDP-alpha-D-glucose: arginine 262 and lysine 267. Position 300 (arginine 300) interacts with D-glucose 6-phosphate. Aspartate 361–glutamate 369 contributes to the UDP-alpha-D-glucose binding site. Leucine 365 to glutamate 369 provides a ligand contact to UDP.

The protein belongs to the glycosyltransferase 20 family. Component of the trehalose synthase complex.

Its subcellular location is the cytoplasm. It carries out the reaction D-glucose 6-phosphate + UDP-alpha-D-glucose = alpha,alpha-trehalose 6-phosphate + UDP + H(+). Functionally, synthase catalytic subunit of the trehalose synthase complex that catalyzes the production of trehalose from glucose-6-phosphate and UDP-alpha-D-glucose in a two step process. Can function independently of the complex. In Encephalitozoon cuniculi (strain GB-M1) (Microsporidian parasite), this protein is Alpha,alpha-trehalose-phosphate synthase [UDP-forming] (TPS1).